Consider the following 372-residue polypeptide: Carbamoyl phosphate synthase small chain (372 aa).

The tract at residues 1–179 is CPSase; that stretch reads MRAILALEDG…ALVTGKTLPP (179 aa). Serine 45, glycine 231, and glycine 233 together coordinate L-glutamine. The Glutamine amidotransferase type-1 domain occupies 183–369; sequence DIVAFDFGIK…RKMIAASKRQ (187 aa). Cysteine 258 functions as the Nucleophile in the catalytic mechanism. The L-glutamine site is built by leucine 259, glutamine 262, asparagine 300, glycine 302, and phenylalanine 303. Active-site residues include histidine 342 and glutamate 344.

The protein belongs to the CarA family. Composed of two chains; the small (or glutamine) chain promotes the hydrolysis of glutamine to ammonia, which is used by the large (or ammonia) chain to synthesize carbamoyl phosphate. Tetramer of heterodimers (alpha,beta)4.

It carries out the reaction hydrogencarbonate + L-glutamine + 2 ATP + H2O = carbamoyl phosphate + L-glutamate + 2 ADP + phosphate + 2 H(+). The catalysed reaction is L-glutamine + H2O = L-glutamate + NH4(+). It participates in amino-acid biosynthesis; L-arginine biosynthesis; carbamoyl phosphate from bicarbonate: step 1/1. It functions in the pathway pyrimidine metabolism; UMP biosynthesis via de novo pathway; (S)-dihydroorotate from bicarbonate: step 1/3. Its function is as follows. Small subunit of the glutamine-dependent carbamoyl phosphate synthetase (CPSase). CPSase catalyzes the formation of carbamoyl phosphate from the ammonia moiety of glutamine, carbonate, and phosphate donated by ATP, constituting the first step of 2 biosynthetic pathways, one leading to arginine and/or urea and the other to pyrimidine nucleotides. The small subunit (glutamine amidotransferase) binds and cleaves glutamine to supply the large subunit with the substrate ammonia. The polypeptide is Carbamoyl phosphate synthase small chain (Akkermansia muciniphila (strain ATCC BAA-835 / DSM 22959 / JCM 33894 / BCRC 81048 / CCUG 64013 / CIP 107961 / Muc)).